Here is a 139-residue protein sequence, read N- to C-terminus: Nucleoside diphosphate kinase (139 aa).

Lys-11, Phe-59, Arg-87, Thr-93, Arg-104, and Asn-114 together coordinate ATP. His-117 serves as the catalytic Pros-phosphohistidine intermediate.

The protein belongs to the NDK family. As to quaternary structure, homotetramer. Mg(2+) serves as cofactor.

It localises to the cytoplasm. It catalyses the reaction a 2'-deoxyribonucleoside 5'-diphosphate + ATP = a 2'-deoxyribonucleoside 5'-triphosphate + ADP. The catalysed reaction is a ribonucleoside 5'-diphosphate + ATP = a ribonucleoside 5'-triphosphate + ADP. Its function is as follows. Major role in the synthesis of nucleoside triphosphates other than ATP. The ATP gamma phosphate is transferred to the NDP beta phosphate via a ping-pong mechanism, using a phosphorylated active-site intermediate. This is Nucleoside diphosphate kinase from Flavobacterium johnsoniae (strain ATCC 17061 / DSM 2064 / JCM 8514 / BCRC 14874 / CCUG 350202 / NBRC 14942 / NCIMB 11054 / UW101) (Cytophaga johnsonae).